The primary structure comprises 550 residues: Ribosomal protein S6 kinase beta (550 aa).

In terms of domain architecture, Protein kinase spans 83–344; that stretch reads FQLLKVLGKG…AEEIKSHAFF (262 aa). Residues 89 to 97 and Lys115 each bind ATP; that span reads LGKGGYGKV. Asp210 (proton acceptor) is an active-site residue. One can recognise an AGC-kinase C-terminal domain in the interval 345–415; it reads KTTDWNLVYA…VAPSVLEMMN (71 aa). Thr404 carries the phosphothreonine modification. Disordered regions lie at residues 433-466 and 484-550; these read RAGAAKSPRKPGDPETASILHGGHSNLFGHGPNS and TAGG…KRVM. Ser439 carries the post-translational modification Phosphoserine. Residues 520–534 are compositionally biased toward low complexity; the sequence is TTTGNGSTTTTRPSN.

The protein belongs to the protein kinase superfamily. AGC Ser/Thr protein kinase family. S6 kinase subfamily. The cofactor is Mg(2+). In terms of processing, may be phosphorylated on Thr-404 by let-363/TOR.

It is found in the cell projection. It localises to the axon. Its subcellular location is the perikaryon. It catalyses the reaction L-seryl-[protein] + ATP = O-phospho-L-seryl-[protein] + ADP + H(+). The enzyme catalyses L-threonyl-[protein] + ATP = O-phospho-L-threonyl-[protein] + ADP + H(+). Its function is as follows. Serine/threonine-protein kinase which regulates mRNA translation. Negatively regulates lifespan and resistance to starvation, oxidative stress, protein aggregation and P.aeruginosa-mediated infection. May regulate these processes by preventing the activation of transcription factor hif-1. Required, probably downstream of let-363/TOR, for the establishment of the proper number of germline progenitors by promoting cell cycle progression and preventing differentiation during larval development. Regulates germ cell size. In addition required for sperm production and embryo viability. Involved in axon regeneration of PLM and ALM neurons by inhibiting growth cone formation early after axotomy and later by inhibiting axon extension. Functions in axon regeneration and lifespan probably by preventing aak-2/AMPK activation. Negatively regulates autophagy. The protein is Ribosomal protein S6 kinase beta of Caenorhabditis elegans.